The primary structure comprises 471 residues: Protoheme IX farnesyltransferase, mitochondrial (471 aa).

The N-terminal 60 residues, 1–60, are a transit peptide targeting the mitochondrion; the sequence is MLLSNVAVNRTVVHTQLVSGSRSALHALSRTSHSVPVTHTHQRRHIFSHKRRLSSSTLAI. 6 consecutive transmembrane segments (helical) span residues 188 to 208, 247 to 267, 287 to 307, 312 to 332, 368 to 388, and 430 to 450; these read AVSL…SGSA, ITGT…VAIL, IINT…GWAA, LLHP…FPHF, LLMF…WWFV, and KLFW…MIHK.

The protein belongs to the UbiA prenyltransferase family.

Its subcellular location is the mitochondrion membrane. The catalysed reaction is heme b + (2E,6E)-farnesyl diphosphate + H2O = Fe(II)-heme o + diphosphate. Its function is as follows. Converts protoheme IX and farnesyl diphosphate to heme O. This is Protoheme IX farnesyltransferase, mitochondrial (COX10) from Yarrowia lipolytica (strain CLIB 122 / E 150) (Yeast).